The following is a 494-amino-acid chain: UDP-N-acetylmuramate--L-alanine ligase (494 aa).

Residue 134–140 (GSHGKTT) participates in ATP binding.

Belongs to the MurCDEF family.

It localises to the cytoplasm. The catalysed reaction is UDP-N-acetyl-alpha-D-muramate + L-alanine + ATP = UDP-N-acetyl-alpha-D-muramoyl-L-alanine + ADP + phosphate + H(+). It functions in the pathway cell wall biogenesis; peptidoglycan biosynthesis. In terms of biological role, cell wall formation. This is UDP-N-acetylmuramate--L-alanine ligase from Prochlorococcus marinus (strain NATL1A).